The sequence spans 94 residues: YcgL domain-containing protein VP0875 (94 aa).

The region spanning 1-84 (MLCSIYKSSK…PPENLLEKYK (84 aa)) is the YcgL domain.

The sequence is that of YcgL domain-containing protein VP0875 from Vibrio parahaemolyticus serotype O3:K6 (strain RIMD 2210633).